A 379-amino-acid chain; its full sequence is Probable pectin lyase B (379 aa).

An N-terminal signal peptide occupies residues 1–20 (MHYKLLFAAAAASLASAVSA). Cystine bridges form between Cys83–Cys102 and Cys92–Cys226. N-linked (GlcNAc...) asparagine glycans are attached at residues Asn129 and Asn252. The active site involves Arg256. A disulfide bridge links Cys323 with Cys331.

Belongs to the polysaccharide lyase 1 family.

The protein resides in the secreted. It carries out the reaction Eliminative cleavage of (1-&gt;4)-alpha-D-galacturonan methyl ester to give oligosaccharides with 4-deoxy-6-O-methyl-alpha-D-galact-4-enuronosyl groups at their non-reducing ends.. Pectinolytic enzymes consist of four classes of enzymes: pectin lyase, polygalacturonase, pectin methylesterase and rhamnogalacturonase. Among pectinolytic enzymes, pectin lyase is the most important in depolymerization of pectin, since it cleaves internal glycosidic bonds of highly methylated pectins. The sequence is that of Probable pectin lyase B (pelB) from Aspergillus niger (strain ATCC MYA-4892 / CBS 513.88 / FGSC A1513).